The sequence spans 231 residues: Flagellar L-ring protein (231 aa).

A signal peptide spans 1 to 18 (MNRLMIVSLLGIATVLGG). The N-palmitoyl cysteine moiety is linked to residue cysteine 19. Cysteine 19 is lipidated: S-diacylglycerol cysteine. The segment at 118–141 (LSLSAEYGGSRDAKGDSQAGQSNS) is disordered.

It belongs to the FlgH family. In terms of assembly, the basal body constitutes a major portion of the flagellar organelle and consists of four rings (L,P,S, and M) mounted on a central rod.

Its subcellular location is the cell outer membrane. It is found in the bacterial flagellum basal body. Its function is as follows. Assembles around the rod to form the L-ring and probably protects the motor/basal body from shearing forces during rotation. The polypeptide is Flagellar L-ring protein (Pseudomonas paraeruginosa (strain DSM 24068 / PA7) (Pseudomonas aeruginosa (strain PA7))).